Consider the following 306-residue polypeptide: Pyridoxal 5'-phosphate synthase subunit PdxS (306 aa).

Residue D36 participates in D-ribose 5-phosphate binding. K93 serves as the catalytic Schiff-base intermediate with D-ribose 5-phosphate. A D-ribose 5-phosphate-binding site is contributed by G165. R177 contributes to the D-glyceraldehyde 3-phosphate binding site. D-ribose 5-phosphate contacts are provided by residues G226 and 247 to 248; that span reads GS.

It belongs to the PdxS/SNZ family. In terms of assembly, in the presence of PdxT, forms a dodecamer of heterodimers.

The enzyme catalyses aldehydo-D-ribose 5-phosphate + D-glyceraldehyde 3-phosphate + L-glutamine = pyridoxal 5'-phosphate + L-glutamate + phosphate + 3 H2O + H(+). The protein operates within cofactor biosynthesis; pyridoxal 5'-phosphate biosynthesis. Catalyzes the formation of pyridoxal 5'-phosphate from ribose 5-phosphate (RBP), glyceraldehyde 3-phosphate (G3P) and ammonia. The ammonia is provided by the PdxT subunit. Can also use ribulose 5-phosphate and dihydroxyacetone phosphate as substrates, resulting from enzyme-catalyzed isomerization of RBP and G3P, respectively. This chain is Pyridoxal 5'-phosphate synthase subunit PdxS, found in Nocardia farcinica (strain IFM 10152).